Here is a 205-residue protein sequence, read N- to C-terminus: Thymidine kinase (205 aa).

ATP-binding positions include 9-16 (SAMNAGKS) and 87-90 (DECQ). The Proton acceptor role is filled by Glu88. Residues Cys145, Cys147, Cys182, and His185 each coordinate Zn(2+).

This sequence belongs to the thymidine kinase family. In terms of assembly, homotetramer.

Its subcellular location is the cytoplasm. It catalyses the reaction thymidine + ATP = dTMP + ADP + H(+). With respect to regulation, allosteric enzyme which is feedback inhibited by dTTP and activated by a number of dNDP and dNTP. In terms of biological role, phosphorylates both thymidine and deoxyuridine. The chain is Thymidine kinase from Escherichia coli (strain K12).